Reading from the N-terminus, the 20-residue chain is KVPVDDQFRRVNNGGATDTR.

Positions 1 to 20 (KVPVDDQFRRVNNGGATDTR) are disordered.

It is found in the secreted. The protein localises to the cell wall. This is 54 kDa cell wall protein from Arabidopsis thaliana (Mouse-ear cress).